A 1165-amino-acid polypeptide reads, in one-letter code: Phenyloxazoline synthase MbtB (1165 aa).

The Carrier 1 domain maps to 5–78 (PARSEDIREE…AWAQLVTAGR (74 aa)). Ser39 bears the O-(pantetheine 4'-phosphoryl)serine mark. The tract at residues 77 to 100 (GRQDTDSAAPPADSSGDPSGETEP) is disordered. The segment at 97-393 (ETEPFALAPM…SSLLLDVDLV (297 aa)) is condensation/cyclization. Residues 578 to 973 (SYAQLRDQAL…RVPGVRTAVA (396 aa)) are adenylation. The 77-residue stretch at 1055 to 1131 (AASTPLEGAL…ALAAVLRAAE (77 aa)) folds into the Carrier 2 domain. Ser1090 carries the O-(pantetheine 4'-phosphoryl)serine modification.

It belongs to the ATP-dependent AMP-binding enzyme family. MbtB subfamily. It depends on pantetheine 4'-phosphate as a cofactor. Post-translationally, 4'-phosphopantetheine is transferred from CoA to a specific serine in each of the two carrier protein domains, leading to their activation from apo to holo forms.

It functions in the pathway siderophore biosynthesis; mycobactin biosynthesis. Its function is as follows. Involved in the initial steps of the mycobactin biosynthetic pathway. Putatively couples activated salicylic acid with serine or threonine and cyclizes this precursor to the hydroxyphenyloxazoline ring system present in this class of siderophores. This Mycolicibacterium paratuberculosis (strain ATCC BAA-968 / K-10) (Mycobacterium paratuberculosis) protein is Phenyloxazoline synthase MbtB (mbtB).